We begin with the raw amino-acid sequence, 273 residues long: Urease accessory protein UreD (273 aa).

It belongs to the UreD family. In terms of assembly, ureD, UreF and UreG form a complex that acts as a GTP-hydrolysis-dependent molecular chaperone, activating the urease apoprotein by helping to assemble the nickel containing metallocenter of UreC. The UreE protein probably delivers the nickel.

Its subcellular location is the cytoplasm. In terms of biological role, required for maturation of urease via the functional incorporation of the urease nickel metallocenter. This is Urease accessory protein UreD from Rhizobium johnstonii (strain DSM 114642 / LMG 32736 / 3841) (Rhizobium leguminosarum bv. viciae).